The sequence spans 305 residues: UDP-3-O-acyl-N-acetylglucosamine deacetylase (305 aa).

3 residues coordinate Zn(2+): His-79, His-238, and Asp-242. His-265 acts as the Proton donor in catalysis.

It belongs to the LpxC family. Zn(2+) is required as a cofactor.

The catalysed reaction is a UDP-3-O-[(3R)-3-hydroxyacyl]-N-acetyl-alpha-D-glucosamine + H2O = a UDP-3-O-[(3R)-3-hydroxyacyl]-alpha-D-glucosamine + acetate. It participates in glycolipid biosynthesis; lipid IV(A) biosynthesis; lipid IV(A) from (3R)-3-hydroxytetradecanoyl-[acyl-carrier-protein] and UDP-N-acetyl-alpha-D-glucosamine: step 2/6. Its function is as follows. Catalyzes the hydrolysis of UDP-3-O-myristoyl-N-acetylglucosamine to form UDP-3-O-myristoylglucosamine and acetate, the committed step in lipid A biosynthesis. The protein is UDP-3-O-acyl-N-acetylglucosamine deacetylase of Vibrio parahaemolyticus serotype O3:K6 (strain RIMD 2210633).